A 146-amino-acid polypeptide reads, in one-letter code: MVMGLGLFLLVFMLGLGLTSPTLAQDNSRYRDFLSKHYDARPQGRNDRYCDSMMRRQGMTSPCKDINTFIHGNRRSIRAICGDENGNPYGENLRISRTPFQVTTCNLRGGSPRPPCRYRATAGFRNIVVACENGLPVHLDQSIFRP.

Residues 1–24 form the signal peptide; that stretch reads MVMGLGLFLLVFMLGLGLTSPTLA. At Gln-25 the chain carries Pyrrolidone carboxylic acid. Catalysis depends on His-37, which acts as the Proton acceptor. A tRNA-binding site is contributed by Arg-45. Intrachain disulfides connect Cys-50/Cys-105, Cys-63/Cys-116, and Cys-81/Cys-131. The Nucleolar localization signal signature appears at 55-59; sequence RRQGM. The tRNA site is built by Cys-105 and Ile-127. His-138 (proton donor) is an active-site residue.

The protein belongs to the pancreatic ribonuclease family. Homodimer. Interacts with RNH1; inhibiting ANG ribonuclease activity. Interacts with PCNA.

Its subcellular location is the secreted. The protein localises to the nucleus. It is found in the nucleolus. It localises to the cytoplasm. The protein resides in the stress granule. With respect to regulation, has weak tRNA ribonuclease activity by itself due to partial autoinhibition by its C-terminus, which folds into a short alpha-helix that partially occludes the substrate-binding site. In absence of stress, the ribonuclease activity is inhibited by RNH1 in the cytoplasm. In response to stress, dissociates from RNH1 in the cytoplasm and associates with cytoplasmic ribosomes with vacant A-sites: ribosomes directly activate the tRNA ribonuclease activity of ANG by refolding the C-terminal alpha-helix. In response to stress, the angiogenic activity of ANG is inhibited by RNH1 in the nucleus. Secreted ribonuclease that can either promote or restrict cell proliferation of target cells, depending on the context. Endocytosed in target cells via its receptor PLXNB2 and translocates to the cytoplasm or nucleus. Under stress conditions, localizes to the cytoplasm and promotes the assembly of stress granules (SGs): specifically cleaves a subset of tRNAs within anticodon loops to produce tRNA-derived stress-induced fragments (tiRNAs), resulting in translation repression and inhibition of cell proliferation. tiRNas also prevent formation of apoptosome, thereby promoting cell survival. Preferentially cleaves RNAs between a pyrimidine and an adenosine residue, suggesting that it cleaves the anticodon loop of tRNA(Ala) (32-UUAGCAU-38) after positions 33 and 36. Cleaves a subset of tRNAs, including tRNA(Ala), tRNA(Glu), tRNA(Gly), tRNA(Lys), tRNA(Val), tRNA(His), tRNA(Asp) and tRNA(Sec). Under growth conditions and in differentiated cells, translocates to the nucleus and stimulates ribosomal RNA (rRNA) transcription, including that containing the initiation site sequences of 45S rRNA, thereby promoting cell growth and proliferation. Angiogenin induces vascularization of normal and malignant tissues via its ability to promote rRNA transcription. Involved in hematopoietic stem and progenitor cell (HSPC) growth and survival by promoting rRNA transcription in growth conditions and inhibiting translation in response to stress, respectively. Mediates the crosstalk between myeloid and intestinal epithelial cells to protect the intestinal epithelial barrier integrity: secreted by myeloid cells and promotes intestinal epithelial cells proliferation and survival. Also mediates osteoclast-endothelial cell crosstalk in growing bone: produced by osteoclasts and protects the neighboring vascular cells against senescence by promoting rRNA transcription. This chain is Angiogenin (ANG), found in Miopithecus talapoin (Angolan talapoin).